Here is a 316-residue protein sequence, read N- to C-terminus: Pantothenate kinase (316 aa).

An ATP-binding site is contributed by 95–102 (GSVAVGKS).

The protein belongs to the prokaryotic pantothenate kinase family.

It is found in the cytoplasm. The enzyme catalyses (R)-pantothenate + ATP = (R)-4'-phosphopantothenate + ADP + H(+). It participates in cofactor biosynthesis; coenzyme A biosynthesis; CoA from (R)-pantothenate: step 1/5. The chain is Pantothenate kinase from Photorhabdus laumondii subsp. laumondii (strain DSM 15139 / CIP 105565 / TT01) (Photorhabdus luminescens subsp. laumondii).